The primary structure comprises 110 residues: U1-lycotoxin-Ls1kk (110 aa).

An N-terminal signal peptide occupies residues 1–20; the sequence is MKFVLLFGVLLVTLFSYSSA. The propeptide occupies 21–44; sequence EMFDDFDQADEDELLSLIEKEEAR. Cystine bridges form between C47–C62, C54–C71, C61–C89, and C73–C87.

This sequence belongs to the neurotoxin 19 (CSTX) family. 03 subfamily. Expressed by the venom gland.

It is found in the secreted. The chain is U1-lycotoxin-Ls1kk from Lycosa singoriensis (Wolf spider).